The chain runs to 508 residues: 2,3-bisphosphoglycerate-independent phosphoglycerate mutase (508 aa).

Asp-13 and Ser-63 together coordinate Mn(2+). Ser-63 serves as the catalytic Phosphoserine intermediate. Substrate contacts are provided by residues His-122, 152–153 (RD), Arg-184, Arg-190, 256–259 (RADR), and Lys-330. Residues Asp-397, His-401, Asp-438, His-439, and His-457 each coordinate Mn(2+).

This sequence belongs to the BPG-independent phosphoglycerate mutase family. Monomer. Mn(2+) serves as cofactor.

It catalyses the reaction (2R)-2-phosphoglycerate = (2R)-3-phosphoglycerate. It participates in carbohydrate degradation; glycolysis; pyruvate from D-glyceraldehyde 3-phosphate: step 3/5. In terms of biological role, catalyzes the interconversion of 2-phosphoglycerate and 3-phosphoglycerate. This Laribacter hongkongensis (strain HLHK9) protein is 2,3-bisphosphoglycerate-independent phosphoglycerate mutase.